A 116-amino-acid chain; its full sequence is Aspartate 1-decarboxylase (116 aa).

Ser-25 functions as the Schiff-base intermediate with substrate; via pyruvic acid in the catalytic mechanism. Residue Ser-25 is modified to Pyruvic acid (Ser). Thr-57 is a binding site for substrate. Tyr-58 serves as the catalytic Proton donor. 73–75 (GAA) lines the substrate pocket.

It belongs to the PanD family. In terms of assembly, heterooctamer of four alpha and four beta subunits. Pyruvate serves as cofactor. In terms of processing, is synthesized initially as an inactive proenzyme, which is activated by self-cleavage at a specific serine bond to produce a beta-subunit with a hydroxyl group at its C-terminus and an alpha-subunit with a pyruvoyl group at its N-terminus.

The protein resides in the cytoplasm. It catalyses the reaction L-aspartate + H(+) = beta-alanine + CO2. It functions in the pathway cofactor biosynthesis; (R)-pantothenate biosynthesis; beta-alanine from L-aspartate: step 1/1. Functionally, catalyzes the pyruvoyl-dependent decarboxylation of aspartate to produce beta-alanine. The sequence is that of Aspartate 1-decarboxylase from Leptospira interrogans serogroup Icterohaemorrhagiae serovar copenhageni (strain Fiocruz L1-130).